We begin with the raw amino-acid sequence, 296 residues long: MENGLNGTFVLKTAAGANIIGHTAQFDHGINIHWMKDLLRCKAIKPGVLANKGVINTSAYPVTIYNTGTTDLHINDKLWVLPPLTDKAMQTTMFEGNVFPPEVYEKTFIQAELSQFIDDMILLHELSTAVPLKKVNTESVAEKNFSTALGVKALGDQLSSNFFWKRLVAAYYNHNRYSTPEEVKLGIFRFISKNWIMHLIESPKGTSSRYNNLFKSWSAVGANFTLHPSQEFDTMEGASKSEEYLKNIFFMRSFLTAIKHAANTWVEFKMPTVGTITGAKETHIRPNHDFSLTLTM.

This is an uncharacterized protein from Magallana gigas (Pacific oyster).